A 356-amino-acid polypeptide reads, in one-letter code: Ion-translocating oxidoreductase complex subunit D (356 aa).

4 helical membrane passes run 20 to 40 (LMLL…WFFG), 42 to 62 (GVLV…ALAI), 68 to 88 (PVGF…IGVS), and 117 to 137 (GFNP…SFPV). Threonine 177 bears the FMN phosphoryl threonine mark. 5 helical membrane-spanning segments follow: residues 205–225 (WASA…LYLL), 229–249 (VYTW…AALF), 259–279 (GSPL…FIVT), 292–312 (VIYG…GSSY), and 315–335 (GVAF…YYTT).

This sequence belongs to the NqrB/RnfD family. As to quaternary structure, the complex is composed of six subunits: RnfA, RnfB, RnfC, RnfD, RnfE and RnfG. Requires FMN as cofactor.

It localises to the cell inner membrane. In terms of biological role, part of a membrane-bound complex that couples electron transfer with translocation of ions across the membrane. This is Ion-translocating oxidoreductase complex subunit D from Cellvibrio japonicus (strain Ueda107) (Pseudomonas fluorescens subsp. cellulosa).